The sequence spans 492 residues: Serine incorporator 4 (492 aa).

10 consecutive transmembrane segments (helical) span residues 58 to 78, 113 to 133, 148 to 168, 179 to 199, 217 to 237, 254 to 274, 281 to 301, 330 to 350, 421 to 441, and 464 to 484; these read FYIL…SKTV, AVYR…VLLV, SFWS…FCIP, IGIC…TAFA, FLGV…GAVL, LLSL…APCI, SGLL…FSAL, IPDA…VLFA, GFHF…TNWF, and VASC…PLLA.

The protein belongs to the TDE1 family.

It localises to the membrane. In terms of biological role, incorporates a polar amino acid serine into membranes and facilitates the synthesis of two serine-derived lipids, phosphatidylserine and sphingolipids. The polypeptide is Serine incorporator 4 (Serinc4) (Rattus norvegicus (Rat)).